The following is a 304-amino-acid chain: Quinolinate synthase (304 aa).

The iminosuccinate site is built by histidine 24 and serine 41. Residue cysteine 86 coordinates [4Fe-4S] cluster. Iminosuccinate-binding positions include 112–114 and serine 129; that span reads YVN. Cysteine 171 contributes to the [4Fe-4S] cluster binding site. Residues 197–199 and threonine 214 each bind iminosuccinate; that span reads HPE. [4Fe-4S] cluster is bound at residue cysteine 259.

It belongs to the quinolinate synthase family. Type 2 subfamily. [4Fe-4S] cluster is required as a cofactor.

The protein resides in the cytoplasm. It catalyses the reaction iminosuccinate + dihydroxyacetone phosphate = quinolinate + phosphate + 2 H2O + H(+). Its pathway is cofactor biosynthesis; NAD(+) biosynthesis; quinolinate from iminoaspartate: step 1/1. Catalyzes the condensation of iminoaspartate with dihydroxyacetone phosphate to form quinolinate. The polypeptide is Quinolinate synthase (Geobacter sp. (strain M21)).